A 161-amino-acid chain; its full sequence is 4-hydroxybenzoyl-CoA reductase subunit gamma (161 aa).

Residues 3-79 (NILRLTLNGR…GKKVETVESL (77 aa)) form the 2Fe-2S ferredoxin-type domain. 8 residues coordinate [2Fe-2S] cluster: C41, C46, C49, C61, C100, C103, C135, and C137.

As to quaternary structure, heterohexamer of two alpha, two beta and two gamma subunits. [2Fe-2S] cluster is required as a cofactor.

It carries out the reaction oxidized 2[4Fe-4S]-[ferredoxin] + benzoyl-CoA + H2O = 4-hydroxybenzoyl-CoA + reduced 2[4Fe-4S]-[ferredoxin] + 2 H(+). With respect to regulation, inactivated by low concentrations of cyanide in vitro. Functionally, component of a complex that catalyzes the reductive dehydroxylation of 4-hydroxybenzoyl-CoA to benzoyl-CoA. Reaction is not reversible. Is a key enzyme in the anaerobic degradation of phenolic compounds. The sequence is that of 4-hydroxybenzoyl-CoA reductase subunit gamma (hcrC) from Thauera aromatica.